The following is a 393-amino-acid chain: Methylthioribose kinase (393 aa).

Residues asparagine 38, lysine 53, and 107-109 (EDL) each bind ATP. A substrate-binding site is contributed by aspartate 225. 242-244 (DPE) serves as a coordination point for ATP. A substrate-binding site is contributed by arginine 332.

It belongs to the methylthioribose kinase family. Homodimer.

The enzyme catalyses 5-(methylsulfanyl)-D-ribose + ATP = 5-(methylsulfanyl)-alpha-D-ribose 1-phosphate + ADP + H(+). Its pathway is amino-acid biosynthesis; L-methionine biosynthesis via salvage pathway; S-methyl-5-thio-alpha-D-ribose 1-phosphate from S-methyl-5'-thioadenosine (hydrolase route): step 2/2. Its function is as follows. Catalyzes the phosphorylation of methylthioribose into methylthioribose-1-phosphate. This chain is Methylthioribose kinase, found in Bacillus cereus (strain AH820).